An 87-amino-acid polypeptide reads, in one-letter code: MAHKKGQGSTQNNRDSAGRRLGVKKFGGEFVRAGNIIIRQRGTKVHPGNNVGLGKDHTIYALIDGYVKFEIKDKQRKKVSVYPIENN.

Residues 1-21 are disordered; sequence MAHKKGQGSTQNNRDSAGRRL.

It belongs to the bacterial ribosomal protein bL27 family.

The polypeptide is Large ribosomal subunit protein bL27 (Nautilia profundicola (strain ATCC BAA-1463 / DSM 18972 / AmH)).